A 288-amino-acid polypeptide reads, in one-letter code: MDSVATPGRTLALVREKGLVPRKSRGQNFLVDANIVRKIARAAEVGPGDTVVEIGPGLGALTQELAARAGLVIAIEIDRELFAALEETLAGRDNVRLVAGDALKVDFDRLVAGILGTGEGRLPTYKVVANLPYYITTPILMHLLTSRFRIAELVLMVQAEVGYRMLARPGGKDYGALSVVVQYYTEPAVVLKVPRTVFYPRPEVDSLVLKLTCRTRPVVQVEDEDFFFRVVRAAFNQRRKTILNALGSLGFEKSKIMEALAGAGIDPRRRGETLGMEEFASISRTLQH.

The S-adenosyl-L-methionine site is built by Asn-28, Leu-30, Gly-55, Glu-76, Asp-101, and Asn-130.

This sequence belongs to the class I-like SAM-binding methyltransferase superfamily. rRNA adenine N(6)-methyltransferase family. RsmA subfamily.

The protein localises to the cytoplasm. The catalysed reaction is adenosine(1518)/adenosine(1519) in 16S rRNA + 4 S-adenosyl-L-methionine = N(6)-dimethyladenosine(1518)/N(6)-dimethyladenosine(1519) in 16S rRNA + 4 S-adenosyl-L-homocysteine + 4 H(+). Functionally, specifically dimethylates two adjacent adenosines (A1518 and A1519) in the loop of a conserved hairpin near the 3'-end of 16S rRNA in the 30S particle. May play a critical role in biogenesis of 30S subunits. The protein is Ribosomal RNA small subunit methyltransferase A of Moorella thermoacetica (strain ATCC 39073 / JCM 9320).